Reading from the N-terminus, the 315-residue chain is Olfactory receptor 2V1 (315 aa).

Residues 1–31 lie on the Extracellular side of the membrane; that stretch reads MGRWVNQSYTDGFFLLGIFSHSQTDLVLFSA. N6 carries an N-linked (GlcNAc...) asparagine glycan. A helical membrane pass occupies residues 32–52; that stretch reads VMVVFTVALCGNVLLIFLIYL. The Cytoplasmic segment spans residues 53 to 58; it reads DAGLHT. Residues 59-79 form a helical membrane-spanning segment; it reads PMYFFLSQLSLMDLMLVCNIV. At 80–99 the chain is on the extracellular side; the sequence is PKMAANFLSGRKSISFVGCG. A disulfide bridge links C98 with C180. The chain crosses the membrane as a helical span at residues 100-120; sequence IQIGFFVSLVGSEGLLLGLMA. Topologically, residues 121–149 are cytoplasmic; the sequence is YDRYVAVSHPLHYPILMNQRVCLQITGSS. The helical transmembrane segment at 150–170 threads the bilayer; sequence WAFGIIDGVIQMVAAMGLPYC. Over 171–198 the chain is Extracellular; that stretch reads GSRSVDHFFCEVQALLKLACADTSLFDT. Residues 199-219 form a helical membrane-spanning segment; sequence LLFACCVFMLLLPFSIIMASY. Topologically, residues 220–238 are cytoplasmic; it reads ACILGAVLRIRSAQAWKKA. A helical membrane pass occupies residues 239–259; that stretch reads LATCSSHLTAVTLFYGAAMFM. The Extracellular segment spans residues 260–272; sequence YLRPRRYRAPSHD. The chain crosses the membrane as a helical span at residues 273 to 293; the sequence is KVASIFYTVLTPMLNPLIYSL. Topologically, residues 294–315 are cytoplasmic; that stretch reads RNGEVMGALRKGLDRCRIGSQH.

This sequence belongs to the G-protein coupled receptor 1 family.

The protein resides in the cell membrane. Odorant receptor. This is Olfactory receptor 2V1 (OR2V1) from Homo sapiens (Human).